The sequence spans 488 residues: Dipeptide and tripeptide permease A (488 aa).

At 1-35 (MSTANTPEDEQKPSLNAFKQPRAFYLIFSIELWER) the chain is on the cytoplasmic side. The helical transmembrane segment at 36-56 (FGYYGLQGIMAVYLVKMLGMS) threads the bilayer. Over 57–60 (EAEA) the chain is Periplasmic. Residues 61 to 81 (ITVFAAFTALVYGFVAIGGWL) form a helical membrane-spanning segment. Residues 82–90 (GDKILGTKR) lie on the Cytoplasmic side of the membrane. A helical transmembrane segment spans residues 91–111 (VIVLGAIVLAIGYAMVAFSDH). Topologically, residues 112–114 (DKD) are periplasmic. The chain crosses the membrane as a helical span at residues 115–135 (MIYWGLATIAVGNGLFKANPS). The Cytoplasmic segment spans residues 136–154 (SLLATCYEKDDPQLDGAFT). The chain crosses the membrane as a helical span at residues 155 to 175 (MYYMSINVGSFLSMLATPWLA). The Periplasmic segment spans residues 176–179 (ANYG). The chain crosses the membrane as a helical span at residues 180 to 200 (WDVAFALSVVGMLITLANFML). The Cytoplasmic segment spans residues 201–219 (CRGWIKDKGSRPDFEPLNY). A helical membrane pass occupies residues 220–240 (LKLLLTLVGIVALTAVSTWLL). Residue His-241 is a topological domain, periplasmic. A helical membrane pass occupies residues 242–262 (NNEVATWSLAIISLGIILIFA). The Cytoplasmic segment spans residues 263–275 (RETFMMKGVARRK). The helical transmembrane segment at 276–296 (MIVAFLLMVEAVVFFVLYDQM) threads the bilayer. The Periplasmic segment spans residues 297-324 (PTSLNFFAIHNVEHAILGFSVEPEQFQS). Residues 325–345 (LNPFWIMLASPLLAAIYNFMG) traverse the membrane as a helical segment. At 346–353 (DKLPMPYK) the chain is on the cytoplasmic side. Residues 354–374 (FTVGMFLSATAFLVLPLGASM) form a helical membrane-spanning segment. The Periplasmic portion of the chain corresponds to 375-391 (ANEAGIVSSWWLVASYG). The helical transmembrane segment at 392 to 412 (FQSIGELMISGLGLAMVAQLV) threads the bilayer. Topologically, residues 413–415 (PQR) are cytoplasmic. A helical transmembrane segment spans residues 416-436 (LMGFIMGAWFLTSAAAAIIAG). Residues 437-460 (KVASLMAVPEDVQNAHASLEIYSS) are Periplasmic-facing. A helical membrane pass occupies residues 461 to 481 (VFLQIGIVTGVIALLMLFTAP). Over 482–488 (MLSKMTQ) the chain is Cytoplasmic.

The protein belongs to the major facilitator superfamily. Proton-dependent oligopeptide transporter (POT/PTR) (TC 2.A.17) family. DtpA subfamily.

It is found in the cell inner membrane. Its function is as follows. Proton-dependent permease that transports di- and tripeptides. The polypeptide is Dipeptide and tripeptide permease A (Proteus mirabilis (strain HI4320)).